The chain runs to 144 residues: Large ribosomal subunit protein uL15 (144 aa).

Residues 1–48 (MIKLECLQDPSPRKRRTKLLGRGPSSGHGKTSGRGHKGDGSRSGYKRR) form a disordered region.

It belongs to the universal ribosomal protein uL15 family. As to quaternary structure, part of the 50S ribosomal subunit.

Its function is as follows. Binds to the 23S rRNA. The chain is Large ribosomal subunit protein uL15 from Chlamydia trachomatis serovar L2 (strain ATCC VR-902B / DSM 19102 / 434/Bu).